The following is a 350-amino-acid chain: MSDVQVRNNWKRDEIETLFALPMNDLLFQAHSVHRQEFDPNEVQISRLLSIKTGACPEDCKYCPQSARYDTGLEKERLLAMETVLTEARSAKAAGASRFCMGAAWRNPKERDMPYLKTMVEEVKSLGMETCMTLGMLSADQASELADAGLDYYNHNLDTSPEYYGDVITTRTYQNRLDTLSNVRASGMKVCSGGIVGMGEKATDRAGLLQQLANLDKHPDSVPINMLVKVEGTPFEKIDDLDPLEFVRTIAVARIIMPKSRVRLSAGRENMTDELQAMCFFAGANSIFYGCKLLTTPNPEENDDMSLFRRLGLHPEQGIAATKEQDEAMLAKAAAQQDKKASAFYDAGAL.

Residues 41-268 (NEVQISRLLS…KSRVRLSAGR (228 aa)) enclose the Radical SAM core domain. [4Fe-4S] cluster-binding residues include C56, C60, and C63. Residues C100, C131, C191, and R263 each contribute to the [2Fe-2S] cluster site.

It belongs to the radical SAM superfamily. Biotin synthase family. As to quaternary structure, homodimer. [4Fe-4S] cluster is required as a cofactor. [2Fe-2S] cluster serves as cofactor.

It carries out the reaction (4R,5S)-dethiobiotin + (sulfur carrier)-SH + 2 reduced [2Fe-2S]-[ferredoxin] + 2 S-adenosyl-L-methionine = (sulfur carrier)-H + biotin + 2 5'-deoxyadenosine + 2 L-methionine + 2 oxidized [2Fe-2S]-[ferredoxin]. It functions in the pathway cofactor biosynthesis; biotin biosynthesis; biotin from 7,8-diaminononanoate: step 2/2. Functionally, catalyzes the conversion of dethiobiotin (DTB) to biotin by the insertion of a sulfur atom into dethiobiotin via a radical-based mechanism. In Shewanella piezotolerans (strain WP3 / JCM 13877), this protein is Biotin synthase.